The following is a 202-amino-acid chain: Small ribosomal subunit protein uS4 (202 aa).

Residues Arg93–Val156 enclose the S4 RNA-binding domain.

This sequence belongs to the universal ribosomal protein uS4 family. As to quaternary structure, part of the 30S ribosomal subunit. Contacts protein S5. The interaction surface between S4 and S5 is involved in control of translational fidelity.

Its function is as follows. One of the primary rRNA binding proteins, it binds directly to 16S rRNA where it nucleates assembly of the body of the 30S subunit. With S5 and S12 plays an important role in translational accuracy. In Pediococcus pentosaceus (strain ATCC 25745 / CCUG 21536 / LMG 10740 / 183-1w), this protein is Small ribosomal subunit protein uS4.